Reading from the N-terminus, the 129-residue chain is Small ribosomal subunit protein bS6 (129 aa).

Belongs to the bacterial ribosomal protein bS6 family.

Its function is as follows. Binds together with bS18 to 16S ribosomal RNA. In Pelobacter propionicus (strain DSM 2379 / NBRC 103807 / OttBd1), this protein is Small ribosomal subunit protein bS6.